The primary structure comprises 763 residues: DEK domain-containing chromatin-associated protein 3 (763 aa).

Disordered regions lie at residues 1 to 324 (MGED…RERK) and 458 to 681 (TGDV…SDKV). Residues 11 to 20 (PTANKTTSLE) show a composition bias toward polar residues. Composition is skewed to basic and acidic residues over residues 32 to 44 (AGGKETQELAKDE), 72 to 97 (SEVKKNEDNAETQKMEEKVEVTKDEG), 124 to 172 (TVMK…KANG), and 180 to 242 (DIKE…KVED). A coiled-coil region spans residues 60–96 (KDDEKAETEDKESEVKKNEDNAETQKMEEKVEVTKDE). Residues 214–286 (GKEKEDKEEN…KEESKGSKKR (73 aa)) are a coiled coil. Acidic residues predominate over residues 243–252 (EKEGSEDEND). Residues 253 to 264 (NEKVESKDAKED) show a composition bias toward basic and acidic residues. Positions 265–277 (EKEETNDDKEDEK) are enriched in acidic residues. The Nuclear localization signal 1 signature appears at 284–291 (KKRGKGTS). Positions 295-311 (KVREKNKTEEVKKDAEP) are enriched in basic and acidic residues. Residues 475 to 484 (KGAKRKRTPK) are compositionally biased toward basic residues. The Nuclear localization signal 2 signature appears at 483–490 (PKKTSPTA). Residues 485–496 (KTSPTAGSSSSK) show a composition bias toward low complexity. Residues 513–551 (KKSLAHSDDESEEEKEEEEKQEEEKAEEKEEKKEEENEN) are a coiled coil. The span at 521-533 (DESEEEKEEEEKQ) shows a compositional bias: acidic residues. Positions 534-547 (EEEKAEEKEEKKEE) are enriched in basic and acidic residues. Over residues 557-578 (SEDEAPQPSESEEKDESEEHSE) the composition is skewed to acidic residues. Composition is skewed to low complexity over residues 606–615 (AVVAAKSSPP) and 650–660 (PIKASPAPSKS). Basic and acidic residues predominate over residues 661–681 (ASKEKPVKRAGKGKDKPSDKV). The 56-residue stretch at 676–731 (KPSDKVLKNAIVEILKRVDFSTATFTDILKELAKEFTEDLTPRKSSIKMIIQEELT) folds into the DEK-C domain. 2 consecutive DNA-binding regions follow at residues 694–708 (DFSTATFTDILKELA) and 723–727 (KMIIQ). A coiled-coil region spans residues 723–753 (KMIIQEELTKLADEEEEEEKKEEDSEKEEAG). Positions 730 to 763 (LTKLADEEEEEEKKEEDSEKEEAGGSGGGEEVKA) are disordered. Gly residues predominate over residues 753 to 763 (GGSGGGEEVKA).

Found in a mRNA splicing-dependent exon junction complex (EJC). Binds specifically histones H3 and H4. Interacts with TOP1A, SCC3, At1g61730, At1g20940, At1g13930, DEK4, HDT1, NIT1, SHL, CYP19-1, GEBPL, HSP70-3, PDP2, PDP3, KIN2, RPL11A and PDS5A. As to expression, highly expressed in young seedlings.

The protein resides in the nucleus. The protein localises to the nucleolus. Chromatin-associated protein which contributes to the modulation of chromatin structure (such as super-helical structure of DNA) and function. Binds to chromatin of protein-coding genes throughout the genome to regulate nucleosome occupancy and chromatin accessibility, and to modulate the expression of target genes. Negative regulator of stress tolerance (e.g. high salt). The sequence is that of DEK domain-containing chromatin-associated protein 3 from Arabidopsis thaliana (Mouse-ear cress).